Consider the following 412-residue polypeptide: Serine hydroxymethyltransferase (412 aa).

Residues L120 and G124–L126 each bind (6S)-5,6,7,8-tetrahydrofolate. K228 carries the N6-(pyridoxal phosphate)lysine modification. S353–F355 serves as a coordination point for (6S)-5,6,7,8-tetrahydrofolate.

It belongs to the SHMT family. Homodimer. The cofactor is pyridoxal 5'-phosphate.

It is found in the cytoplasm. It catalyses the reaction (6R)-5,10-methylene-5,6,7,8-tetrahydrofolate + glycine + H2O = (6S)-5,6,7,8-tetrahydrofolate + L-serine. Its pathway is one-carbon metabolism; tetrahydrofolate interconversion. It functions in the pathway amino-acid biosynthesis; glycine biosynthesis; glycine from L-serine: step 1/1. Its function is as follows. Catalyzes the reversible interconversion of serine and glycine with tetrahydrofolate (THF) serving as the one-carbon carrier. This reaction serves as the major source of one-carbon groups required for the biosynthesis of purines, thymidylate, methionine, and other important biomolecules. Also exhibits THF-independent aldolase activity toward beta-hydroxyamino acids, producing glycine and aldehydes, via a retro-aldol mechanism. This chain is Serine hydroxymethyltransferase, found in Lachnoclostridium phytofermentans (strain ATCC 700394 / DSM 18823 / ISDg) (Clostridium phytofermentans).